Reading from the N-terminus, the 278-residue chain is Myb/SANT-like DNA-binding domain-containing protein 1 (278 aa).

The disordered stretch occupies residues 1–27 (MVRGAGPGPSLSALSHPTGASGMAAAE). The region spanning 44–129 (RNWTDAEMRG…PDWPYYLAID (86 aa)) is the Myb-like domain. The tract at residues 138–168 (SCDGKLPDSQPPGPSTSQTEASLSPPAKSTP) is disordered.

The polypeptide is Myb/SANT-like DNA-binding domain-containing protein 1 (MSANTD1) (Homo sapiens (Human)).